The chain runs to 284 residues: Bifunctional protein FolD (284 aa).

NADP(+) is bound by residues 166–168 (GAS) and Ile-232.

The protein belongs to the tetrahydrofolate dehydrogenase/cyclohydrolase family. Homodimer.

The enzyme catalyses (6R)-5,10-methylene-5,6,7,8-tetrahydrofolate + NADP(+) = (6R)-5,10-methenyltetrahydrofolate + NADPH. It catalyses the reaction (6R)-5,10-methenyltetrahydrofolate + H2O = (6R)-10-formyltetrahydrofolate + H(+). Its pathway is one-carbon metabolism; tetrahydrofolate interconversion. Its function is as follows. Catalyzes the oxidation of 5,10-methylenetetrahydrofolate to 5,10-methenyltetrahydrofolate and then the hydrolysis of 5,10-methenyltetrahydrofolate to 10-formyltetrahydrofolate. This chain is Bifunctional protein FolD, found in Pseudoalteromonas translucida (strain TAC 125).